The primary structure comprises 161 residues: Globin CTT-VIIB-8 (161 aa).

The signal sequence occupies residues 1-16 (MKFFAVLALCIVGAIA). Residues 18-161 (PLTADEASLV…NTYAIVVPRL (144 aa)) form the Globin domain. Heme b is bound by residues H76 and H111.

This sequence belongs to the globin family. As to quaternary structure, homodimer.

The protein is Globin CTT-VIIB-8 (CTT-7B8) of Chironomus thummi thummi (Midge).